The primary structure comprises 450 residues: Chromosomal replication initiator protein DnaA (450 aa).

The interval 1-84 (MENIHDLWDR…AVKFIIPPNQ (84 aa)) is domain I, interacts with DnaA modulators. Residues 84–111 (QADEKLELPSSAKKQRKPYEEANDFPQS) are domain II. A domain III, AAA+ region region spans residues 112 to 328 (MLNPKYTFDT…GALIRVVAYS (217 aa)). ATP is bound by residues Gly-156, Gly-158, Lys-159, and Thr-160. The domain IV, binds dsDNA stretch occupies residues 329-450 (SLINKEITAD…KEIQEKLKQL (122 aa)).

Belongs to the DnaA family. Oligomerizes as a right-handed, spiral filament on DNA at oriC.

It localises to the cytoplasm. Plays an essential role in the initiation and regulation of chromosomal replication. ATP-DnaA binds to the origin of replication (oriC) to initiate formation of the DNA replication initiation complex once per cell cycle. Binds the DnaA box (a 9 base pair repeat at the origin) and separates the double-stranded (ds)DNA. Forms a right-handed helical filament on oriC DNA; dsDNA binds to the exterior of the filament while single-stranded (ss)DNA is stabiized in the filament's interior. The ATP-DnaA-oriC complex binds and stabilizes one strand of the AT-rich DNA unwinding element (DUE), permitting loading of DNA polymerase. After initiation quickly degrades to an ADP-DnaA complex that is not apt for DNA replication. Binds acidic phospholipids. The polypeptide is Chromosomal replication initiator protein DnaA (Geobacillus thermodenitrificans (strain NG80-2)).